Consider the following 148-residue polypeptide: SsrA-binding protein (148 aa).

The interval 123 to 148 (KLHDKRETEKKRDWEREKARIMRSAT) is disordered. Positions 126 to 142 (DKRETEKKRDWEREKAR) are enriched in basic and acidic residues.

Belongs to the SmpB family.

Its subcellular location is the cytoplasm. Required for rescue of stalled ribosomes mediated by trans-translation. Binds to transfer-messenger RNA (tmRNA), required for stable association of tmRNA with ribosomes. tmRNA and SmpB together mimic tRNA shape, replacing the anticodon stem-loop with SmpB. tmRNA is encoded by the ssrA gene; the 2 termini fold to resemble tRNA(Ala) and it encodes a 'tag peptide', a short internal open reading frame. During trans-translation Ala-aminoacylated tmRNA acts like a tRNA, entering the A-site of stalled ribosomes, displacing the stalled mRNA. The ribosome then switches to translate the ORF on the tmRNA; the nascent peptide is terminated with the 'tag peptide' encoded by the tmRNA and targeted for degradation. The ribosome is freed to recommence translation, which seems to be the essential function of trans-translation. The sequence is that of SsrA-binding protein from Burkholderia pseudomallei (strain 1710b).